The sequence spans 229 residues: Large ribosomal subunit protein uL1 (229 aa).

This sequence belongs to the universal ribosomal protein uL1 family. Part of the 50S ribosomal subunit.

In terms of biological role, binds directly to 23S rRNA. The L1 stalk is quite mobile in the ribosome, and is involved in E site tRNA release. Functionally, protein L1 is also a translational repressor protein, it controls the translation of the L11 operon by binding to its mRNA. The protein is Large ribosomal subunit protein uL1 of Histophilus somni (strain 2336) (Haemophilus somnus).